A 235-amino-acid polypeptide reads, in one-letter code: Large ribosomal subunit protein uL1 (235 aa).

Belongs to the universal ribosomal protein uL1 family. In terms of assembly, part of the 50S ribosomal subunit.

In terms of biological role, binds directly to 23S rRNA. The L1 stalk is quite mobile in the ribosome, and is involved in E site tRNA release. Protein L1 is also a translational repressor protein, it controls the translation of the L11 operon by binding to its mRNA. This Mycobacterium sp. (strain JLS) protein is Large ribosomal subunit protein uL1.